The chain runs to 1028 residues: Beta-galactosidase (1028 aa).

Substrate contacts are provided by N104 and D203. D203 provides a ligand contact to Na(+). Mg(2+) contacts are provided by E418, H420, and E463. Substrate-binding positions include E463 and 539–542 (EYAH). E463 functions as the Proton donor in the catalytic mechanism. Residue E539 is the Nucleophile of the active site. N599 is a binding site for Mg(2+). F603 and N606 together coordinate Na(+). Substrate contacts are provided by N606 and W1004.

It belongs to the glycosyl hydrolase 2 family. Homodimer. It depends on Mg(2+) as a cofactor. Mn(2+) serves as cofactor. The cofactor is Fe cation. Requires Na(+) as cofactor. K(+) is required as a cofactor.

The enzyme catalyses Hydrolysis of terminal non-reducing beta-D-galactose residues in beta-D-galactosides.. With respect to regulation, completely inhibited by Hg(2+), Cu(2+) Ag(2+), and partially inhibited by Zn(2+), imidazole and EDTA. Activated by Ca(2+), Co(2+), Ni(2+). Functionally, this beta-galactosidase is also able to catalyze glycosyl transfer to a series of acceptors, including hexose, pentose, beta- or alpha-disaccharides, hexahydroxy alcohol, cyclitol, and aromatic glycosides, resulting in the production of galacto-oligosaccharides (GOS). This Enterobacter agglomerans (Erwinia herbicola) protein is Beta-galactosidase (lacZ).